Here is a 437-residue protein sequence, read N- to C-terminus: Protein translocase subunit SecY (437 aa).

10 helical membrane passes run 19 to 39 (LFTL…IPGV), 69 to 89 (LLQI…SIIL), 122 to 142 (VALA…APLF), 157 to 177 (IFTT…VMWL), 189 to 209 (GMSI…LWAI), 219 to 239 (WIEF…VVFV), 276 to 296 (VIPV…AQFA), 316 to 336 (PIYI…YVAI), 378 to 398 (GSLY…GFGA), and 400 to 420 (QNFP…LETV).

The protein belongs to the SecY/SEC61-alpha family. As to quaternary structure, component of the Sec protein translocase complex. Heterotrimer consisting of SecY, SecE and SecG subunits. The heterotrimers can form oligomers, although 1 heterotrimer is thought to be able to translocate proteins. Interacts with the ribosome. Interacts with SecDF, and other proteins may be involved. Interacts with SecA.

The protein localises to the cell membrane. Functionally, the central subunit of the protein translocation channel SecYEG. Consists of two halves formed by TMs 1-5 and 6-10. These two domains form a lateral gate at the front which open onto the bilayer between TMs 2 and 7, and are clamped together by SecE at the back. The channel is closed by both a pore ring composed of hydrophobic SecY resides and a short helix (helix 2A) on the extracellular side of the membrane which forms a plug. The plug probably moves laterally to allow the channel to open. The ring and the pore may move independently. The sequence is that of Protein translocase subunit SecY from Streptomyces galbus.